The primary structure comprises 62 residues: Large ribosomal subunit protein uL29 (62 aa).

The protein belongs to the universal ribosomal protein uL29 family.

The protein is Large ribosomal subunit protein uL29 of Geobacter sulfurreducens (strain ATCC 51573 / DSM 12127 / PCA).